The chain runs to 876 residues: Radial spoke head 10 homolog B (876 aa).

Residues 1–16 (MVKEKKKADKKGDKSA) show a composition bias toward basic and acidic residues. Positions 1–71 (MVKEKKKADK…VQMEQSEEET (71 aa)) are disordered. The segment covering 17–37 (RSPSSISDNPEASKQDSNASK) has biased composition (polar residues). The segment covering 39-50 (EVAPSAVVPVVE) has biased composition (low complexity). MORN repeat units lie at residues 86–108 (YEGE…GGNT), 109–129 (YHGM…WADG), 132–154 (YEGD…DGST), 155–172 (YEGE…MFKC), 179–196 (YIGH…SIYY), 204–225 (YEGD…KSGN), 227–244 (YEGQ…RMRW), 251–268 (YTGH…THTW), 284–305 (YIGE…ASGA), and 307–328 (YEGE…KNGH). Residues 356–372 (WSDASQRSRQPRGSSVS) are compositionally biased toward polar residues. A disordered region spans residues 356 to 386 (WSDASQRSRQPRGSSVSAVREPETLRKLDGS). Positions 375–386 (REPETLRKLDGS) are enriched in basic and acidic residues. The stretch at 790–832 (LKEKVKENQLQEAELAQQRQIENEELEARLNILREEEARKQDF) forms a coiled coil. The segment at 839-876 (LKEPSEIPASQPLTPSPPKEDLASIQTSKASPGKKKKK) is disordered.

As to quaternary structure, interacts with RSPH6A. Does not appear to be part of the axonemal radial spoke complexes 1 or 2. Expressed in ependymal cells (at protein level).

It localises to the cytoplasm. The protein localises to the cytoskeleton. Its subcellular location is the cilium axoneme. The protein resides in the cell projection. It is found in the cilium. It localises to the flagellum. Functionally, may function as part of the axonemal radial spoke complex 3 (RS3). Radial spoke complexes are important for ciliary motility. This chain is Radial spoke head 10 homolog B, found in Mus musculus (Mouse).